Here is a 318-residue protein sequence, read N- to C-terminus: Transaldolase (318 aa).

Lys-126 acts as the Schiff-base intermediate with substrate in catalysis.

This sequence belongs to the transaldolase family. Type 1 subfamily. As to quaternary structure, homodimer.

The protein localises to the cytoplasm. It catalyses the reaction D-sedoheptulose 7-phosphate + D-glyceraldehyde 3-phosphate = D-erythrose 4-phosphate + beta-D-fructose 6-phosphate. It participates in carbohydrate degradation; pentose phosphate pathway; D-glyceraldehyde 3-phosphate and beta-D-fructose 6-phosphate from D-ribose 5-phosphate and D-xylulose 5-phosphate (non-oxidative stage): step 2/3. Functionally, transaldolase is important for the balance of metabolites in the pentose-phosphate pathway. This Cupriavidus necator (strain ATCC 17699 / DSM 428 / KCTC 22496 / NCIMB 10442 / H16 / Stanier 337) (Ralstonia eutropha) protein is Transaldolase.